Consider the following 72-residue polypeptide: MSYQQQQCKQPCQPPPVCPTPKCPEPCPPPKCPEPCPSPKCPQPCPPQQCQQKYPPVTPSPPCQPKCPPKSK.

The span at 1–11 (MSYQQQQCKQP) shows a compositional bias: low complexity. Residues 1 to 20 (MSYQQQQCKQPCQPPPVCPT) form a disordered region. A run of 3 repeats spans residues 21–29 (PKCPEPCPP), 30–38 (PKCPEPCPS), and 39–47 (PKCPQPCPP). A 3 X 9 AA tandem repeats of P-K-C-P-[EQ]-P-C-P-[PS] region spans residues 21 to 47 (PKCPEPCPPPKCPEPCPSPKCPQPCPP). Pro residues-rich tracts occupy residues 33 to 47 (PEPC…PCPP) and 56 to 72 (PVTP…PKSK). The interval 33–72 (PEPCPSPKCPQPCPPQQCQQKYPPVTPSPPCQPKCPPKSK) is disordered.

Belongs to the cornifin (SPRR) family.

The protein resides in the cytoplasm. Its function is as follows. Cross-linked envelope protein of keratinocytes. It is a keratinocyte protein that first appears in the cell cytosol, but ultimately becomes cross-linked to membrane proteins by transglutaminase. All that results in the formation of an insoluble envelope beneath the plasma membrane. This chain is Small proline-rich protein 2D (SPRR2D), found in Homo sapiens (Human).